The sequence spans 307 residues: Leucine-rich repeat-containing protein 59 (307 aa).

Position 1 is an N-acetylmethionine (Met-1). Thr-2 carries the post-translational modification N-acetylthreonine; in Leucine-rich repeat-containing protein 59, N-terminally processed. The Cytoplasmic segment spans residues Thr-2–Ser-244. 5 LRR repeats span residues Asn-10–Pro-31, Lys-40–Thr-62, His-63–Leu-84, Asn-86–Leu-107, and Asn-109–Ala-128. Phosphoserine is present on residues Ser-23 and Ser-25. An N6-succinyllysine modification is found at Lys-73. Lys-135 bears the N6-acetyllysine mark. The stretch at Met-148–Lys-216 forms a coiled coil. Residues Ala-150–His-241 are disordered. Over residues Asp-154–Ala-221 the composition is skewed to basic and acidic residues. The segment covering Ser-229–His-241 has biased composition (basic residues). A helical membrane pass occupies residues Trp-245–Val-265. The Lumenal segment spans residues Cys-266 to Gln-307.

Can form homodimers. Interacts with SGO1. Interacts with FGF1.

It localises to the microsome membrane. The protein localises to the endoplasmic reticulum membrane. The protein resides in the nucleus envelope. Its function is as follows. Required for nuclear import of FGF1, but not that of FGF2. Might regulate nuclear import of exogenous FGF1 by facilitating interaction with the nuclear import machinery and by transporting cytosolic FGF1 to, and possibly through, the nuclear pores. This is Leucine-rich repeat-containing protein 59 (Lrrc59) from Mus musculus (Mouse).